The primary structure comprises 177 residues: Inorganic pyrophosphatase (177 aa).

Residues K30, R44, and Y56 each coordinate substrate. Residues D66, D71, and D103 each contribute to the Mg(2+) site. Y142 is a binding site for substrate.

Belongs to the PPase family. In terms of assembly, homohexamer. Requires Mg(2+) as cofactor.

The protein localises to the cytoplasm. It catalyses the reaction diphosphate + H2O = 2 phosphate + H(+). In terms of biological role, catalyzes the hydrolysis of inorganic pyrophosphate (PPi) forming two phosphate ions. The sequence is that of Inorganic pyrophosphatase from Mesorhizobium japonicum (strain LMG 29417 / CECT 9101 / MAFF 303099) (Mesorhizobium loti (strain MAFF 303099)).